The sequence spans 4749 residues: E3 ubiquitin-protein ligase MYCBP2 (4749 aa).

Disordered stretches follow at residues 87–127, 170–192, and 609–628; these read DRDQ…RSKS, AASKNSVQSGESDSDEEEESREP, and ASKGEDGESTKSRRQSKPYK. Residues 100–124 show a composition bias toward basic residues; that stretch reads SRNKKILNKKKLKRKQKSKSKVKTR. S127, S178, S181, and S183 each carry phosphoserine. RCC1 repeat units lie at residues 600–655, 699–755, 907–957, 958–1009, and 1011–1066; these read DGSV…VISK, NGEV…MMCP, KRDK…VLME, NGDV…LLMD, and QVFT…LRID. Residues 899 to 910 show a composition bias toward basic residues; the sequence is SHPAQLKHKRDK. Positions 899 to 928 are disordered; sequence SHPAQLKHKRDKHKDGSGDRGEKDASKITT. Basic and acidic residues predominate over residues 911–924; that stretch reads HKDGSGDRGEKDAS. A PHR domain 1 region spans residues 1235–1386; the sequence is NRFESHGGGW…GQIPQLLYRL (152 aa). Position 1621 is a phosphoserine (S1621). The interval 1723 to 1881 is PHR domain 2; it reads NRFTKTSQGR…GQIPQILYYR (159 aa). The cysteines at positions 1745 and 1860 are disulfide-linked. An RAE1 binding region spans residues 2018 to 2544; the sequence is AVIESEHPYK…FNQHLGKSLL (527 aa). Disordered regions lie at residues 2313-2336 and 2780-3084; these read KKTSLQQDQGKKCQRIPGSPSAAA and QQRQ…KGDG. A Filamin repeat occupies 2331-2438; sequence SPSAAASSAD…IDAGLEVKVK (108 aa). Over residues 2780–2803 the composition is skewed to polar residues; the sequence is QQRQLQSDRGTISTSSRPVSTSGK. The span at 2814–2832 shows a compositional bias: basic and acidic residues; it reads VKPDGHVSRTPADQKKPRG. At S2841 the chain carries Phosphoserine. The span at 2847–2857 shows a compositional bias: basic and acidic residues; the sequence is DAAKLRSDSHS. A compositionally biased stretch (polar residues) spans 2858-2879; it reads RSLSPNHNTLQTLKSDGRTSSG. A phosphoserine mark is found at S2859 and S2861. Low complexity-rich tracts occupy residues 2884–2894 and 2904–2917; these read SPGPGSRSSSP and SSPSGASSPRSSSP. Phosphoserine is present on residues S2905 and S2911. The segment covering 2918–2929 has biased composition (polar residues); sequence QDKNLPQKSTAP. The segment covering 2932-2943 has biased composition (basic and acidic residues); the sequence is TKLDPPRERSKS. Residues S2941, S2943, and S2992 each carry the phosphoserine modification. Polar residues predominate over residues 3008–3021; that stretch reads CTSSTLKTNGVTDS. 2 stretches are compositionally biased toward basic and acidic residues: residues 3027-3037 and 3047-3056; these read GDLKSVDEGSN and PLKDEQEMRA. S3057 is modified (phosphoserine). Residues 3060-3073 are compositionally biased toward basic residues; it reads ISRKCANRHTRPKK. Phosphoserine is present on residues S3162, S3550, and S3577. A disordered region spans residues 3677-3700; that stretch reads VEAEEDEDEDNKSNKENAEQEKDT. Residues 3687-3700 show a composition bias toward basic and acidic residues; it reads NKSNKENAEQEKDT. In terms of domain architecture, DOC spans 3789 to 3967; that stretch reads FSISVQSGFE…SVAQQRSCEA (179 aa). Residues 3986–4007 are disordered; the sequence is SGDAEPTPEQEEKALLSSPEGE. T3992 is modified (phosphothreonine). Residues S4002 and S4003 each carry the phosphoserine modification. C4499, C4502, C4517, H4519, H4522, C4525, C4546, C4549, C4615, and C4618 together coordinate Zn(2+). An RING-type; atypical zinc finger spans residues 4499 to 4550; sequence CMICFTEALSAAPAIQLDCSHVFHLQCCRRVLENRWLGPRITFGFISCPICK. Positions 4610–4747 are tandem cysteine domain; the sequence is YAYYVCYKCR…LGCGVCRNAH (138 aa). Residue C4629 is part of the active site. Zn(2+)-binding residues include C4646, C4649, C4658, H4661, C4670, C4673, and C4674. C4681 is an active-site residue. C4688, C4691, C4709, C4723, H4729, C4740, and C4743 together coordinate Zn(2+).

This sequence belongs to the RING-Cys relay (RCR) family. In terms of assembly, interacts with MYC. Interacts with TSC2 (tuberin) when TSC2 is in complex with TSC1 (hamartin). Interacts with FBXO45. Interacts with RAE1. Interacts with CPNE1 (via VWFA domain) and CPNE4 (via VWFA domain). Interacts with (sumoylated) RANGAP1; interaction with sumoylated RANGAP1 inhibits E3 ubiquitin-protein ligase activity and promotes MYCBP2 translocation to the nucleus. Interacts with RAN. Interacts with ATP13A2; the interaction inhibits the ubiquitination of TSC2 by MYCBP2. Interacts with USP11. In terms of processing, autoubiquitinated. As to expression, expression is mostly restricted to the nervous system, including expression in motor and sensory axons. During postnatal development, expression is particularly strong in the cerebellum, hippocampus and retina. Lower levels of expression are observed throughout the cerebral cortex.

Its subcellular location is the nucleus. It localises to the cell projection. It is found in the axon. The protein localises to the cytoplasm. The protein resides in the cytoskeleton. It catalyses the reaction [E2 ubiquitin-conjugating enzyme]-S-ubiquitinyl-L-cysteine + [acceptor protein]-L-threonine = [E2 ubiquitin-conjugating enzyme]-L-cysteine + [acceptor protein]-3-O-ubiquitinyl-L-threonine.. It participates in protein modification; protein ubiquitination. In terms of biological role, atypical E3 ubiquitin-protein ligase which specifically mediates ubiquitination of threonine and serine residues on target proteins, instead of ubiquitinating lysine residues. Shows esterification activity towards both threonine and serine, with a preference for threonine, and acts via two essential catalytic cysteine residues that relay ubiquitin to its substrate via thioester intermediates. Interacts with the E2 enzymes UBE2D1, UBE2D3, UBE2E1 and UBE2L3. Plays a key role in neural development, probably by mediating ubiquitination of threonine residues on target proteins. Involved in different processes such as regulation of neurite outgrowth, synaptic growth, synaptogenesis and axon degeneration. Required for the formation of major central nervous system axon tracts. Required for proper axon growth by regulating axon navigation and axon branching: acts by regulating the subcellular location and stability of MAP3K12/DLK. Required for proper localization of retinogeniculate projections but not for eye-specific segregation. Regulates axon guidance in the olfactory system. Involved in Wallerian axon degeneration, an evolutionarily conserved process that drives the loss of damaged axons: acts by promoting destabilization of NMNAT2, probably via ubiquitination of NMNAT2. Catalyzes ubiquitination of threonine and/or serine residues on NMNAT2, consequences of threonine and/or serine ubiquitination are however unknown. Regulates the internalization of TRPV1 in peripheral sensory neurons. May mediate ubiquitination and subsequent proteasomal degradation of TSC2/tuberin. Independently of the E3 ubiquitin-protein ligase activity, also acts as a guanosine exchange factor (GEF) for RAN in neurons of dorsal root ganglia. May function as a facilitator or regulator of transcriptional activation by MYC. Acts in concert with HUWE1 to regulate the circadian clock gene expression by promoting the lithium-induced ubiquination and degradation of NR1D1. The polypeptide is E3 ubiquitin-protein ligase MYCBP2 (Mus musculus (Mouse)).